We begin with the raw amino-acid sequence, 98 residues long: DLTPKVQVYSRFPASAGTKNVLNCFAAGFHPPKISITLMKDGVPMEGAQYSDMSFNDDWSFQRLVYADFTPSSDAVYTCKVDHETLKEPQVYKWDPEF.

The 89-residue stretch at 4–92 (PKVQVYSRFP…HETLKEPQVY (89 aa)) folds into the Ig-like C1-type domain. Cys-24 and Cys-79 are oxidised to a cystine.

The protein belongs to the beta-2-microglobulin family. As to quaternary structure, heterodimer of an alpha chain and a beta chain. Beta-2-microglobulin is the beta-chain of major histocompatibility complex class I molecules.

It localises to the secreted. In terms of biological role, component of the class I major histocompatibility complex (MHC). Involved in the presentation of peptide antigens to the immune system. The polypeptide is Beta-2-microglobulin (B2M) (Meleagris gallopavo (Wild turkey)).